A 620-amino-acid polypeptide reads, in one-letter code: MNNFILLEEQLIKKSQQKRRTSPSNFKVRFFVLTKASLAYFEDRHGKKRTLKGSIELSRIKCVEIVKSDISIPCHYKYPFQVVHDNYLLYVFAPDRESRQRWVLALKEETRNNNSLVPKYHPNFWMDGKWRCCSQLEKLATGCAQYDPTKNASKKPLPPTPEDNRRPLWEPEETVVIALYDYQTNDPQELALRRNEEYCLLDSSEIHWWRVQDRNGHEGYVPSSYLVEKSPNNLETYEWYNKSISRDKAEKLLLDTGKEGAFMVRDSRTAGTYTVSVFTKAVVSENNPCIKHYHIKETNDNPKRYYVAEKYVFDSIPLLINYHQHNGGGLVTRLRYPVCFGRQKAPVTAGLRYGKWVIDPSELTFVQEIGSGQFGLVHLGYWLNKDKVAIKTIREGAMSEEDFIEEAEVMMKLSHPKLVQLYGVCLEQAPICLVFEFMEHGCLSDYLRTQRGLFAAETLLGMCLDVCEGMAYLEEACVIHRDLAARNCLVGENQVIKVSDFGMTRFVLDDQYTSSTGTKFPVKWASPEVFSFSRYSSKSDVWSFGVLMWEVFSEGKIPYENRSNSEVVEDISTGFRLYKPRLASTHVYQIMNHCWKERPEDRPAFSRLLRQLAEIAESGL.

Positions 4 to 111 constitute a PH domain; it reads FILLEEQLIK…WVLALKEETR (108 aa). The segment at 113–149 adopts a Btk-type zinc-finger fold; the sequence is NNSLVPKYHPNFWMDGKWRCCSQLEKLATGCAQYDPT. The Zn(2+) site is built by His-121, Cys-132, Cys-133, and Cys-143. In terms of domain architecture, SH3 spans 171-231; the sequence is PEETVVIALY…PSSYLVEKSP (61 aa). Tyr-180 carries the post-translational modification Phosphotyrosine; by autocatalysis. Residues 239 to 338 enclose the SH2 domain; the sequence is WYNKSISRDK…GLVTRLRYPV (100 aa). Residues 363–615 form the Protein kinase domain; it reads LTFVQEIGSG…SRLLRQLAEI (253 aa). ATP is bound by residues 369–377 and Lys-391; that span reads IGSGQFGLV. Asp-482 serves as the catalytic Proton acceptor. Tyr-512 is subject to Phosphotyrosine; by LCK. Position 565 is a phosphoserine (Ser-565).

Belongs to the protein kinase superfamily. Tyr protein kinase family. TEC subfamily. Homooligomerizes; this association negatively regulates kinase activity. Interacts with PPIA/CYPA; this interaction regulates TCR signal strength via a proline-directed conformational switch in ITK. Interacts with THEMIS. Interacts with FASLG. Interacts with VAV1; this interaction is important for VAV1 localization and TCR-induced actin polarization. Interacts with TBX21. Requires Zn(2+) as cofactor. Phosphorylated at Tyr-512 in the activation loop of the kinase domain by LCK. Subsequent autophosphorylation at Tyr-180 leads to the kinase activation. The autophosphorylated Tyr-180 lies within the substrate binding sequence of the SH3 domain. Post-translationally, ubiquitinated. As to expression, T-cell lines and natural killer cell lines.

The protein localises to the cytoplasm. The protein resides in the nucleus. It carries out the reaction L-tyrosyl-[protein] + ATP = O-phospho-L-tyrosyl-[protein] + ADP + H(+). In terms of biological role, tyrosine kinase that plays an essential role in regulation of the adaptive immune response. Regulates the development, function and differentiation of conventional T-cells and nonconventional NKT-cells. When antigen presenting cells (APC) activate T-cell receptor (TCR), a series of phosphorylation lead to the recruitment of ITK to the cell membrane, in the vicinity of the stimulated TCR receptor, where it is phosphorylated by LCK. Phosphorylation leads to ITK autophosphorylation and full activation. Once activated, phosphorylates PLCG1, leading to the activation of this lipase and subsequent cleavage of its substrates. In turn, the endoplasmic reticulum releases calcium in the cytoplasm and the nuclear activator of activated T-cells (NFAT) translocates into the nucleus to perform its transcriptional duty. Phosphorylates 2 essential adapter proteins: the linker for activation of T-cells/LAT protein and LCP2. Then, a large number of signaling molecules such as VAV1 are recruited and ultimately lead to lymphokine production, T-cell proliferation and differentiation. Required for TCR-mediated calcium response in gamma-delta T-cells, may also be involved in the modulation of the transcriptomic signature in the Vgamma2-positive subset of immature gamma-delta T-cells. Phosphorylates TBX21 at 'Tyr-530' and mediates its interaction with GATA3. This is Tyrosine-protein kinase ITK/TSK (ITK) from Homo sapiens (Human).